The following is a 111-amino-acid chain: Toxin 3FTx-Tel4 (111 aa).

A signal peptide spans 1-19; the sequence is MKTLLLALVVVAFMCLGSA. Residues 20 to 34 constitute a propeptide that is removed on maturation; sequence DQLGLGSQRIDWEQG. Glutamine 35 is subject to Pyrrolidone carboxylic acid. 5 cysteine pairs are disulfide-bonded: cysteine 44/cysteine 68, cysteine 47/cysteine 55, cysteine 61/cysteine 87, cysteine 91/cysteine 102, and cysteine 103/cysteine 108.

The protein belongs to the three-finger toxin family. Ancestral subfamily. Boigatoxin sub-subfamily. As to expression, expressed by the venom gland.

The protein resides in the secreted. Functionally, potent postsynaptic neurotoxin. Displays readily reversible competitive antagonism at the nicotinic acetylcholine receptor (nAChR). This chain is Toxin 3FTx-Tel4, found in Telescopus dhara (Egyptian catsnake).